Reading from the N-terminus, the 220-residue chain is Small ribosomal subunit protein uS2 (220 aa).

This sequence belongs to the universal ribosomal protein uS2 family.

This Methanococcus maripaludis (strain C5 / ATCC BAA-1333) protein is Small ribosomal subunit protein uS2.